The chain runs to 612 residues: Elongation factor 4 (612 aa).

Residues 11–193 (KHIRNFAIVA…KVVKDIPAPS (183 aa)) form the tr-type G domain. Residues 23–28 (DHGKST) and 140–143 (NKID) each bind GTP.

The protein belongs to the TRAFAC class translation factor GTPase superfamily. Classic translation factor GTPase family. LepA subfamily.

It localises to the cell membrane. The catalysed reaction is GTP + H2O = GDP + phosphate + H(+). Functionally, required for accurate and efficient protein synthesis under certain stress conditions. May act as a fidelity factor of the translation reaction, by catalyzing a one-codon backward translocation of tRNAs on improperly translocated ribosomes. Back-translocation proceeds from a post-translocation (POST) complex to a pre-translocation (PRE) complex, thus giving elongation factor G a second chance to translocate the tRNAs correctly. Binds to ribosomes in a GTP-dependent manner. The polypeptide is Elongation factor 4 (Lactobacillus helveticus (strain DPC 4571)).